The following is a 315-amino-acid chain: MSGERAKRFPLALEDLKRAPRKSEVRSGSGERHAASAVPKAADKPAAVLKPVAKTGAARALPGTTAAKPATAPKPNLLKPAMPQPAAPKLAAPSIAPAGAFALTSERVRERMVERLRANGVTDARVLDAMAAVPRHMFVDPGLATQAYEDAALPIGHQQTISKPSVVARMIELAMAGRTLERVLEIGTGCGYQAAVLSHVARDVYSIERIKPLYERAKLNLRPLRVPNIRLHYGDGRVGLPSAAPFDAIVIAAAGLDVPQALLEQLAIGGRLVAPVGAQSGQHQVLTLVERVAPAQWRESRLDRVFFVPLKSGVI.

Disordered regions lie at residues 1–47 (MSGE…KPAA) and 59–89 (RALPGTTAAKPATAPKPNLLKPAMPQPAAPK). Residues 14–34 (EDLKRAPRKSEVRSGSGERHA) are compositionally biased toward basic and acidic residues. Composition is skewed to low complexity over residues 35 to 47 (ASAVPKAADKPAA) and 59 to 81 (RALPGTTAAKPATAPKPNLLKPA). Serine 162 is an active-site residue.

The protein belongs to the methyltransferase superfamily. L-isoaspartyl/D-aspartyl protein methyltransferase family.

It is found in the cytoplasm. It catalyses the reaction [protein]-L-isoaspartate + S-adenosyl-L-methionine = [protein]-L-isoaspartate alpha-methyl ester + S-adenosyl-L-homocysteine. Functionally, catalyzes the methyl esterification of L-isoaspartyl residues in peptides and proteins that result from spontaneous decomposition of normal L-aspartyl and L-asparaginyl residues. It plays a role in the repair and/or degradation of damaged proteins. The polypeptide is Protein-L-isoaspartate O-methyltransferase (Burkholderia ambifaria (strain MC40-6)).